The primary structure comprises 329 residues: Quinone oxidoreductase (329 aa).

Ala-2 carries the post-translational modification N-acetylalanine. Lys-23 is subject to N6-acetyllysine. Residues Tyr-53, 158 to 161, Gly-181, His-200, Asn-229, 246 to 249, and 269 to 271 contribute to the NADP(+) site; these read SGGV, VGSR, and VTV. Phosphoserine is present on Ser-248. Lys-296 carries the N6-succinyllysine modification.

Belongs to the zinc-containing alcohol dehydrogenase family. Quinone oxidoreductase subfamily. Homotetramer.

The protein resides in the cytoplasm. The enzyme catalyses 2 a quinone + NADPH + H(+) = 2 a 1,4-benzosemiquinone + NADP(+). Does not have alcohol dehydrogenase activity. Binds NADP and acts through a one-electron transfer process. Orthoquinones, such as 1,2-naphthoquinone or 9,10-phenanthrenequinone, are the best substrates (in vitro). May act in the detoxification of xenobiotics. Interacts with (AU)-rich elements (ARE) in the 3'-UTR of target mRNA species and enhances their stability. NADPH binding interferes with mRNA binding. In Pongo abelii (Sumatran orangutan), this protein is Quinone oxidoreductase (CRYZ).